Reading from the N-terminus, the 745-residue chain is Translation initiation factor IF-2 (745 aa).

The segment at 1–154 (MSDKPRRDTG…PAARPVVRPR (154 aa)) is disordered. Over residues 36 to 56 (TGRSPNASTGGNRSAGNQAGN) the composition is skewed to polar residues. Positions 68 to 98 (ATTPAPNRNTPPAGARQGGAANARTGTPPVA) are enriched in low complexity. The segment covering 99–113 (RGGGGGVTPPTGRGG) has biased composition (gly residues). Low complexity predominate over residues 114–126 (NNPRAARNQPRSR). Basic and acidic residues predominate over residues 127-138 (QQPEEREREHVL). In terms of domain architecture, tr-type G spans 241–410 (PRPPVVTIMG…LLVADLEDLR (170 aa)). The tract at residues 250 to 257 (GHVDHGKT) is G1. 250-257 (GHVDHGKT) lines the GTP pocket. A G2 region spans residues 275–279 (GITQH). Residues 296–299 (DTPG) are G3. GTP-binding positions include 296-300 (DTPGH) and 350-353 (NKID). Positions 350 to 353 (NKID) are G4. A G5 region spans residues 386 to 388 (SAR).

This sequence belongs to the TRAFAC class translation factor GTPase superfamily. Classic translation factor GTPase family. IF-2 subfamily.

The protein resides in the cytoplasm. Functionally, one of the essential components for the initiation of protein synthesis. Protects formylmethionyl-tRNA from spontaneous hydrolysis and promotes its binding to the 30S ribosomal subunits. Also involved in the hydrolysis of GTP during the formation of the 70S ribosomal complex. The polypeptide is Translation initiation factor IF-2 (Chloroflexus aurantiacus (strain ATCC 29366 / DSM 635 / J-10-fl)).